We begin with the raw amino-acid sequence, 445 residues long: Histidinol dehydrogenase (445 aa).

Positions 134, 198, and 226 each coordinate NAD(+). The substrate site is built by T249, Q271, and H274. 2 residues coordinate Zn(2+): Q271 and H274. Catalysis depends on proton acceptor residues E340 and H341. Substrate contacts are provided by H341, D374, E428, and H433. D374 contributes to the Zn(2+) binding site. H433 contributes to the Zn(2+) binding site.

The protein belongs to the histidinol dehydrogenase family. The cofactor is Zn(2+).

It catalyses the reaction L-histidinol + 2 NAD(+) + H2O = L-histidine + 2 NADH + 3 H(+). The protein operates within amino-acid biosynthesis; L-histidine biosynthesis; L-histidine from 5-phospho-alpha-D-ribose 1-diphosphate: step 9/9. Functionally, catalyzes the sequential NAD-dependent oxidations of L-histidinol to L-histidinaldehyde and then to L-histidine. This Nocardia farcinica (strain IFM 10152) protein is Histidinol dehydrogenase.